The sequence spans 344 residues: Heat-inducible transcription repressor HrcA (344 aa).

It belongs to the HrcA family.

Its function is as follows. Negative regulator of class I heat shock genes (grpE-dnaK-dnaJ and groELS operons). Prevents heat-shock induction of these operons. The chain is Heat-inducible transcription repressor HrcA from Streptococcus sanguinis (strain SK36).